The sequence spans 371 residues: D-erythrose-4-phosphate dehydrogenase (371 aa).

Residue 12 to 13 participates in NAD(+) binding; it reads RI. Substrate contacts are provided by residues 154–156, Arg-200, 213–214, and Arg-236; these read SCT and TK. Catalysis depends on Cys-155, which acts as the Nucleophile. Asn-318 provides a ligand contact to NAD(+).

This sequence belongs to the glyceraldehyde-3-phosphate dehydrogenase family. Epd subfamily. Homotetramer.

The protein localises to the cytoplasm. The enzyme catalyses D-erythrose 4-phosphate + NAD(+) + H2O = 4-phospho-D-erythronate + NADH + 2 H(+). It functions in the pathway cofactor biosynthesis; pyridoxine 5'-phosphate biosynthesis; pyridoxine 5'-phosphate from D-erythrose 4-phosphate: step 1/5. Functionally, catalyzes the NAD-dependent conversion of D-erythrose 4-phosphate to 4-phosphoerythronate. The protein is D-erythrose-4-phosphate dehydrogenase of Psychromonas ingrahamii (strain DSM 17664 / CCUG 51855 / 37).